The sequence spans 125 residues: uncharacterized protein (125 aa).

Transmembrane regions (helical) follow at residues 22–44 and 54–73; these read TPLM…NAAV and YMGI…SVLM.

This sequence belongs to the bacteriophage holin family. Cp-1 holin subfamily.

It localises to the cell membrane. This is an uncharacterized protein from Clostridium acetobutylicum (strain ATCC 824 / DSM 792 / JCM 1419 / IAM 19013 / LMG 5710 / NBRC 13948 / NRRL B-527 / VKM B-1787 / 2291 / W).